We begin with the raw amino-acid sequence, 272 residues long: MKNIRHIYYVSENTGLLAKDSGKSLLCQFPGVEFQEELLPFIRTKDDAQRTINAIREKCGEEKPIIFSTIFDPEINKILQHEDVILLNICEPFLTQLEGMLGKNALRASGHSRNVDQQIMSNRVDAIHYTISHDDGTAIMDYEEADLIIVGVSRSGKTPISVFLATQMGIKTANYPLVEQDLTFCQLPEDIIKNKHKVVGLSISPDVLHTFREQRYKGSHYAQMSTCKRETLQSKRIFEKYDLPVVFSDARSIEETATQVAQELSKQWNPIF.

Residue 151 to 158 (GVSRSGKT) coordinates ADP.

This sequence belongs to the pyruvate, phosphate/water dikinase regulatory protein family. PSRP subfamily.

It catalyses the reaction [pyruvate, water dikinase] + ADP = [pyruvate, water dikinase]-phosphate + AMP + H(+). The enzyme catalyses [pyruvate, water dikinase]-phosphate + phosphate + H(+) = [pyruvate, water dikinase] + diphosphate. Bifunctional serine/threonine kinase and phosphorylase involved in the regulation of the phosphoenolpyruvate synthase (PEPS) by catalyzing its phosphorylation/dephosphorylation. This chain is Putative phosphoenolpyruvate synthase regulatory protein, found in Desulfotalea psychrophila (strain LSv54 / DSM 12343).